The primary structure comprises 296 residues: AUGMIN subunit 2 (296 aa).

Coiled coils occupy residues 56-83 (DDLI…QGRK) and 253-285 (AVHK…NRRL). The interval 218-296 (AVSLPTTPGG…WPPSVKKSSV (79 aa)) is disordered. Residues 264–277 (QNEEEEEEEEEEDG) are compositionally biased toward acidic residues.

Belongs to the HAUS2 family. Part of the augmin complex composed of 8 subunits. The complex acts on microtubules and interacts with gamma-tubulin in spindles and the phragmoplast.

Its function is as follows. Contributes to the assembly of the acentrosomal spindle and phragmoplast microtubule arrays as part of the augmin complex. The sequence is that of AUGMIN subunit 2 from Arabidopsis thaliana (Mouse-ear cress).